We begin with the raw amino-acid sequence, 121 residues long: Ribonuclease P protein component (121 aa).

It belongs to the RnpA family. Consists of a catalytic RNA component (M1 or rnpB) and a protein subunit.

It carries out the reaction Endonucleolytic cleavage of RNA, removing 5'-extranucleotides from tRNA precursor.. RNaseP catalyzes the removal of the 5'-leader sequence from pre-tRNA to produce the mature 5'-terminus. It can also cleave other RNA substrates such as 4.5S RNA. The protein component plays an auxiliary but essential role in vivo by binding to the 5'-leader sequence and broadening the substrate specificity of the ribozyme. The protein is Ribonuclease P protein component of Neisseria meningitidis serogroup A / serotype 4A (strain DSM 15465 / Z2491).